Here is a 151-residue protein sequence, read N- to C-terminus: 6,7-dimethyl-8-ribityllumazine synthase (151 aa).

5-amino-6-(D-ribitylamino)uracil-binding positions include phenylalanine 18, 49 to 51, and 74 to 76; these read ALE and CVI. 79–80 lines the (2S)-2-hydroxy-3-oxobutyl phosphate pocket; the sequence is ET. Histidine 82 (proton donor) is an active-site residue. Position 107 (asparagine 107) interacts with 5-amino-6-(D-ribitylamino)uracil. Residue arginine 121 coordinates (2S)-2-hydroxy-3-oxobutyl phosphate.

This sequence belongs to the DMRL synthase family.

The enzyme catalyses (2S)-2-hydroxy-3-oxobutyl phosphate + 5-amino-6-(D-ribitylamino)uracil = 6,7-dimethyl-8-(1-D-ribityl)lumazine + phosphate + 2 H2O + H(+). It functions in the pathway cofactor biosynthesis; riboflavin biosynthesis; riboflavin from 2-hydroxy-3-oxobutyl phosphate and 5-amino-6-(D-ribitylamino)uracil: step 1/2. In terms of biological role, catalyzes the formation of 6,7-dimethyl-8-ribityllumazine by condensation of 5-amino-6-(D-ribitylamino)uracil with 3,4-dihydroxy-2-butanone 4-phosphate. This is the penultimate step in the biosynthesis of riboflavin. The protein is 6,7-dimethyl-8-ribityllumazine synthase of Bartonella tribocorum (strain CIP 105476 / IBS 506).